The primary structure comprises 68 residues: Conotoxin Eb11.7 (68 aa).

The first 26 residues, 1–26, serve as a signal peptide directing secretion; that stretch reads MMFRLTSVSCFLLVIVCLNLFQVVLT. Intrachain disulfides connect cysteine 29–cysteine 43, cysteine 36–cysteine 48, cysteine 42–cysteine 52, and cysteine 47–cysteine 56. Phenylalanine 60 is modified (phenylalanine amide). Residues 64-68 constitute a propeptide that is removed on maturation; it reads ATFQE.

This sequence belongs to the conotoxin I2 superfamily. Expressed by the venom duct.

The protein localises to the secreted. In Conus eburneus (Ivory cone), this protein is Conotoxin Eb11.7.